Here is a 303-residue protein sequence, read N- to C-terminus: Ribosomal protein uL3 glutamine methyltransferase (303 aa).

Belongs to the protein N5-glutamine methyltransferase family. PrmB subfamily.

The catalysed reaction is L-glutaminyl-[ribosomal protein uL3] + S-adenosyl-L-methionine = N(5)-methyl-L-glutaminyl-[ribosomal protein uL3] + S-adenosyl-L-homocysteine + H(+). Functionally, methylates large ribosomal subunit protein uL3 on a specific glutamine residue. The sequence is that of Ribosomal protein uL3 glutamine methyltransferase from Neisseria meningitidis serogroup A / serotype 4A (strain DSM 15465 / Z2491).